A 100-amino-acid chain; its full sequence is MQLTPREIEKLMVYTLADVALKRKSRGLKLNYPEAVAIITAAALEGAREGKTLEEVMDDSRHVLTKEDVMDGVADLIPHVQVEAIFTDGSRLVTVHDPIQ.

It belongs to the urease gamma subunit family. In terms of assembly, heterotrimer of UreA (gamma), UreB (beta) and UreC (alpha) subunits. Three heterotrimers associate to form the active enzyme.

Its subcellular location is the cytoplasm. It catalyses the reaction urea + 2 H2O + H(+) = hydrogencarbonate + 2 NH4(+). The protein operates within nitrogen metabolism; urea degradation; CO(2) and NH(3) from urea (urease route): step 1/1. This Photorhabdus laumondii subsp. laumondii (strain DSM 15139 / CIP 105565 / TT01) (Photorhabdus luminescens subsp. laumondii) protein is Urease subunit gamma.